The primary structure comprises 108 residues: Ig light chain C region (108 aa).

An Ig-like domain is found at 7–102 (PTVSIYCPSL…LTPALAKSFQ (96 aa)). Cystine bridges form between C13-C106 and C28-C86.

This chain is Ig light chain C region, found in Aquarana catesbeiana (American bullfrog).